The chain runs to 407 residues: 4-hydroxy-3-methylbut-2-en-1-yl diphosphate synthase (ferredoxin) (407 aa).

[4Fe-4S] cluster is bound by residues C316, C319, C350, and E357.

This sequence belongs to the IspG family. It depends on [4Fe-4S] cluster as a cofactor.

The catalysed reaction is (2E)-4-hydroxy-3-methylbut-2-enyl diphosphate + 2 oxidized [2Fe-2S]-[ferredoxin] + H2O = 2-C-methyl-D-erythritol 2,4-cyclic diphosphate + 2 reduced [2Fe-2S]-[ferredoxin] + H(+). Its pathway is isoprenoid biosynthesis; isopentenyl diphosphate biosynthesis via DXP pathway; isopentenyl diphosphate from 1-deoxy-D-xylulose 5-phosphate: step 5/6. In terms of biological role, converts 2C-methyl-D-erythritol 2,4-cyclodiphosphate (ME-2,4cPP) into 1-hydroxy-2-methyl-2-(E)-butenyl 4-diphosphate. This Cyanothece sp. (strain PCC 7425 / ATCC 29141) protein is 4-hydroxy-3-methylbut-2-en-1-yl diphosphate synthase (ferredoxin).